Here is a 430-residue protein sequence, read N- to C-terminus: Protein trichome birefringence-like 24 (430 aa).

The helical; Signal-anchor for type II membrane protein transmembrane segment at 15–35 (VLLIKLISAILISFFAFRLFI) threads the bilayer. Residues 153–155 (GDS) carry the GDS motif motif. A DCXHWCLPGXXDXWN motif motif is present at residues 406–420 (DCLHWCLPGPFDYLN).

The protein belongs to the PC-esterase family. TBL subfamily.

Its subcellular location is the membrane. Functionally, may act as a bridging protein that binds pectin and other cell wall polysaccharides. Probably involved in maintaining esterification of pectins. May be involved in the specific O-acetylation of cell wall polymers. The sequence is that of Protein trichome birefringence-like 24 (TBL24) from Arabidopsis thaliana (Mouse-ear cress).